A 712-amino-acid polypeptide reads, in one-letter code: Polyribonucleotide nucleotidyltransferase (712 aa).

Mg(2+)-binding residues include Asp-487 and Asp-493. The KH domain occupies 554 to 613 (PKIITMTINPDKIRDVIGPSGKQINKIIEETGVKIDIEQDGTVFISSINQEMNDKAKKII). The S1 motif domain occupies 623-691 (GEIYEGKVKR…KQGRVNLSRK (69 aa)).

Belongs to the polyribonucleotide nucleotidyltransferase family. Mg(2+) is required as a cofactor.

Its subcellular location is the cytoplasm. It carries out the reaction RNA(n+1) + phosphate = RNA(n) + a ribonucleoside 5'-diphosphate. Its function is as follows. Involved in mRNA degradation. Catalyzes the phosphorolysis of single-stranded polyribonucleotides processively in the 3'- to 5'-direction. This Bacillus cereus (strain G9842) protein is Polyribonucleotide nucleotidyltransferase.